An 80-amino-acid chain; its full sequence is MNEKSYQSNPDDRSDNVEKLQDMIENTLDNIDESEAAMALSTDQEKQMIKQKNENRKMSIDAMRSEIKDEEAARKNGYTE.

Belongs to the Tlp family.

It localises to the spore core. This is Small, acid-soluble spore protein Tlp from Bacillus pumilus (strain SAFR-032).